Here is an 80-residue protein sequence, read N- to C-terminus: Putative UPF0377 protein YMR324C (80 aa).

Residues A13 to V33 traverse the membrane as a helical segment.

This sequence belongs to the UPF0377 family.

Its subcellular location is the membrane. This chain is Putative UPF0377 protein YMR324C, found in Saccharomyces cerevisiae (strain ATCC 204508 / S288c) (Baker's yeast).